Here is a 408-residue protein sequence, read N- to C-terminus: 2,3-bisphosphoglycerate-independent phosphoglycerate mutase 1 (408 aa).

Belongs to the BPG-independent phosphoglycerate mutase family. A-PGAM subfamily. Monomer. The cofactor is Mn(2+).

The catalysed reaction is (2R)-2-phosphoglycerate = (2R)-3-phosphoglycerate. The protein operates within carbohydrate degradation; glycolysis; pyruvate from D-glyceraldehyde 3-phosphate: step 3/5. In terms of biological role, catalyzes the interconversion of 2-phosphoglycerate and 3-phosphoglycerate. This chain is 2,3-bisphosphoglycerate-independent phosphoglycerate mutase 1 (apgM1), found in Archaeoglobus fulgidus (strain ATCC 49558 / DSM 4304 / JCM 9628 / NBRC 100126 / VC-16).